The following is a 1372-amino-acid chain: MSVVNFYGQLSNTQQFDQIRINIASPEQVRSWSFGEVIKPETINYRTFKPEKDGLFCARIFGPVKDYECLCGKYKRMKNRGITCEKCGVEVTVSRVRRERMGHIELAAPVAHIWFLKSLPSRISTLLDMTMRDIEKILYFENYVVVDPGLSILQKGELLTEEELQKAKDKYGEDAFTASIGAEVVQQMLKELDFPTLKQELYEELQNTTSEVKKKKLVKRLKLVEDFLESENKPEWMIMNVLPVMPPELRPLVMLDGGRFATSDLNELYRRVINRNNRLKKLIESKAPDIIVRNEKRMLQEAVDALFDNGRRGRAAKNANKRPFKSLSDMLKGKQGRFRQNLLGKRVDYSGRSVIVVGPELKLHQCGLPKKMALELFKPFIYSKLELYGIATTIKAAKRMVEAEKPEVWDVLEEVIREHPVLLNRAPTLHRLGIQAFEPLLIEGKAIQLHPLVCAAFNADFDGDQMAVHIPLSIEAQLEARVFMMSTNNILSPANGRPIIVPDKDIVLGLYYLTLAFDHEVGEGMMFSDLTEMEHALYNKFITIHTKIKYRRNQLNAEGKIVPVIVDTTYGRLMVGELLPSNPNIEYKFINKPLTKKDISLVIDLVYRHCGQKATVIFADQLMKLGFKYACSSGISFGMDDMVVPKSKIVHIDETQLEIKEFEQQYSNGLITYGEKYNKVIDAWSRCTDRVANDMMKEIAKPPVSDDSNQQKINSIYMMAISGARGSFQQIKQLGGMRGLMTKSNGQIIPIPIIANFKEGLTVFECFNSANGMRKGQIDTALKTASSGYLTRKLVDVAQDCIITEKDCNTDKGIEVKSIIEGGEVIAPLAEMILGRTAAINIYHPVTNDLILTKGELINESKLEQIESAGLDRIMIKSVLTCESSTGICAICYGRDLATGSLVSEGEAIGVIAAQSIGEPGTQLTMRTFHIGGAATKGAEVSSVEASYDAKVKILSRNVVINSEERKIVMSRNCELLLLDNNGNEKAHSKIPYGARLLVDEGDMVTKTQKLAEWDPYTIPIITEKSGKVLFKDMVEGISVRDVTDEATGIPSKVIIESKQYSRGAELRPRIQLLDAKGEIIMLSNGLEARYYLPVGAVLSVEDGVQISVGDIIARIPKESTTTKDITGGLPRVAELFEARRPKDHAVIAEIDGRVEFGKDYKSKRRIIINPVDGSMGLEYMVPKGKHVVVNEGDFVKKGDLLIDGNPVLQDILKVMGVELLASYIVKEVQAVYRLQGVKIDDKHIEVIIRQMLQKVEITDSGGTTLLVGEKIDRREFDEINEKAIKNGLRPADAQLILQGITKSSLQTRSFISAASFQETTRVLTEAAIAGKVDKLRGLKENVIVGRLVPAGTGFFMDKMRKVAAKLDEENA.

Positions 69, 71, 84, and 87 each coordinate Zn(2+). The Mg(2+) site is built by aspartate 460, aspartate 462, and aspartate 464. 4 residues coordinate Zn(2+): cysteine 808, cysteine 882, cysteine 889, and cysteine 892.

It belongs to the RNA polymerase beta' chain family. The RNAP catalytic core consists of 2 alpha, 1 beta, 1 beta' and 1 omega subunit. When a sigma factor is associated with the core the holoenzyme is formed, which can initiate transcription. It depends on Mg(2+) as a cofactor. Zn(2+) is required as a cofactor.

It catalyses the reaction RNA(n) + a ribonucleoside 5'-triphosphate = RNA(n+1) + diphosphate. Its function is as follows. DNA-dependent RNA polymerase catalyzes the transcription of DNA into RNA using the four ribonucleoside triphosphates as substrates. The sequence is that of DNA-directed RNA polymerase subunit beta' from Rickettsia bellii (strain OSU 85-389).